The chain runs to 221 residues: Protein DEHYDRATION-INDUCED 19 homolog 2 (221 aa).

Disordered regions lie at residues 1-24 (MEDD…TAAK) and 162-193 (VLPD…SDSD).

This sequence belongs to the Di19 family. Post-translationally, not phosphorylated in vitro by CPK3 or CPK11. Expressed in seedlings, roots, leaves, stems, flowers and siliques.

It is found in the cytoplasm. The protein localises to the nucleus. The chain is Protein DEHYDRATION-INDUCED 19 homolog 2 (DI19-2) from Arabidopsis thaliana (Mouse-ear cress).